The following is a 764-amino-acid chain: MTQLENEVPDKDHLRFFSLGGSNEVGRSCHILQYKGKTLMLDAGIHPAHQGLASLPYYDEFDLSTIDLLLISHFHLDHAASLPYVMQRTNFRGRVFMTHPTKAIYRWLLNDFVKVTSIGDSPGQDSSNDNLYSDEDLAESFDRIETIDYHSTMEVNGIKFTAFHAGHVLGAAMFQIEIAGVRVLFTGDYSREVDRHLNSAEVPPQSSDVIIVESTFGTATHEPRQNRERKLTQLIHTVVSKGGRVLLPVFALGRAQEIMLILDEYWQNHKEELGNGQVPIFYASNLAKKCMSVFQTYVNMMNDDIRKKFKDSQTNPFIFKNISYLKNLDEFEDFGPSVMLASPGMLQNGLSRDILEKWCPEEKNLVLVTGYSVEGTMAKYLLLEPEAIPSVHNPEITIPRRCQVDEITFAAHVDFRENLEFIELIGASNIILVHGESNPMGRLKSALLSNFSSLKDTENEVHVFNPRNCVFVDIEFKDVKVARAVGKIIEDLDEFITEEDALKNEKRITEIHEEDPETEESKTEIVKEENEKIVSGILVSDEKNFDLSLVSLSDLREHYQQLSTTVLTERQTVHLDCKSELVYWHICQMFGDVDVYIDEENVSLKNINPEFKTRKIKKGELEIKIMGDVILNIVDNVATLQWTQNVISDSVADSVMAILLSVESAPASIKMSSKSCGHHHGHDDHTTKIKNISRVFKEQFGDTFTLFLNEEDSKEEIKGTINLGKTTACINFSKMVVEECNSNPLKGRIESLLKIGSDLVAPLC.

Residues H73, H75, D77, H78, H167, and D188 each coordinate Zn(2+). H412 (proton donor) is an active-site residue. H434 serves as a coordination point for Zn(2+).

This sequence belongs to the metallo-beta-lactamase superfamily. RNA-metabolizing metallo-beta-lactamase-like family. CPSF2/YSH1 subfamily.

It is found in the nucleus. Component of the cleavage factor I (CF I) involved in pre-mRNA 3'-end processing. In Kluyveromyces lactis (strain ATCC 8585 / CBS 2359 / DSM 70799 / NBRC 1267 / NRRL Y-1140 / WM37) (Yeast), this protein is Endoribonuclease YSH1 (YSH1).